Reading from the N-terminus, the 181-residue chain is Cyclic AMP-dependent transcription factor ATF-3 (181 aa).

Residues Val76–Asn96 are disordered. Residue Lys78 forms a Glycyl lysine isopeptide (Lys-Gly) (interchain with G-Cter in SUMO2) linkage. Residues Asp86–His149 enclose the bZIP domain. Positions Arg88–Lys110 are basic motif. The segment at Leu114 to Leu142 is leucine-zipper. At Thr162 the chain carries Phosphothreonine. Lys175 is covalently cross-linked (Glycyl lysine isopeptide (Lys-Gly) (interchain with G-Cter in SUMO2)).

It belongs to the bZIP family. ATF subfamily. In terms of assembly, ATF3 alone can bind DNA, but it preferentially forms heteromeric complexes with JUN and JUNB and does not interact with FOS. In terms of tissue distribution, expressed in tissues containing skeletal muscle or smooth muscle. Expressed in cutaneous and muscular sensory neurons.

The protein localises to the nucleus. This protein binds the cAMP response element (CRE) (consensus: 5'-GTGACGT[AC][AG]-3'), a sequence present in many viral and cellular promoters. Represses transcription from promoters with ATF sites. It may repress transcription by stabilizing the binding of inhibitory cofactors at the promoter. The sequence is that of Cyclic AMP-dependent transcription factor ATF-3 (Atf3) from Rattus norvegicus (Rat).